The sequence spans 401 residues: Tyrosine--tRNA ligase (401 aa).

The short motif at 42–51 (PTAPDLHLGH) is the 'HIGH' region element. Positions 226-230 (KMSKS) match the 'KMSKS' region motif. Residue K229 coordinates ATP. The S4 RNA-binding domain occupies 336 to 397 (IALAQLLKQI…GKRRIAKLSI (62 aa)).

This sequence belongs to the class-I aminoacyl-tRNA synthetase family. TyrS type 2 subfamily. As to quaternary structure, homodimer.

The protein resides in the cytoplasm. The catalysed reaction is tRNA(Tyr) + L-tyrosine + ATP = L-tyrosyl-tRNA(Tyr) + AMP + diphosphate + H(+). Its function is as follows. Catalyzes the attachment of tyrosine to tRNA(Tyr) in a two-step reaction: tyrosine is first activated by ATP to form Tyr-AMP and then transferred to the acceptor end of tRNA(Tyr). The protein is Tyrosine--tRNA ligase of Legionella pneumophila subsp. pneumophila (strain Philadelphia 1 / ATCC 33152 / DSM 7513).